A 275-amino-acid chain; its full sequence is MTQYSHVKYTQSPTPSVVSGYSSASRLHSPLPPPANHRRDCLSATTKSYKYLRRLLKFNQMDFEFALWQMLYLFVAPQKVYRNFNYRKQTKSQFARDDPAFLVLLVVCLCVTSLGFAYVLGLSFWQSISFIFYVVFVDCIFVGIIIASFFWAVTNRYLRTNSLEPDIEWGYAFDVHLNAFFPPLMLLHFIQLFFYNWLISQTWFISRFLGNTFWLMGMGYYVYITFLGYNCIPHLKNTRIILIALPIIFLLFLVVTIIGWNATISFVNFYKYRVY.

Residues 1 to 26 (MTQYSHVKYTQSPTPSVVSGYSSASR) show a composition bias toward polar residues. The tract at residues 1 to 39 (MTQYSHVKYTQSPTPSVVSGYSSASRLHSPLPPPANHRR) is disordered. The Cytoplasmic segment spans residues 1-99 (MTQYSHVKYT…TKSQFARDDP (99 aa)). A helical transmembrane segment spans residues 100 to 120 (AFLVLLVVCLCVTSLGFAYVL). The Lumenal segment spans residues 121 to 129 (GLSFWQSIS). Residues 130-150 (FIFYVVFVDCIFVGIIIASFF) traverse the membrane as a helical segment. The Cytoplasmic portion of the chain corresponds to 151-178 (WAVTNRYLRTNSLEPDIEWGYAFDVHLN). Residues 179–199 (AFFPPLMLLHFIQLFFYNWLI) form a helical membrane-spanning segment. Residues 200-207 (SQTWFISR) lie on the Lumenal side of the membrane. Residues 208 to 228 (FLGNTFWLMGMGYYVYITFLG) form a helical membrane-spanning segment. Over 229–239 (YNCIPHLKNTR) the chain is Cytoplasmic. Residues 240–260 (IILIALPIIFLLFLVVTIIGW) traverse the membrane as a helical segment. Topologically, residues 261–275 (NATISFVNFYKYRVY) are lumenal.

This sequence belongs to the unc-50 family.

Its subcellular location is the golgi apparatus membrane. In terms of biological role, required for cell surface expression of acetylcholine receptors. In Drosophila melanogaster (Fruit fly), this protein is Protein unc-50 homolog.